We begin with the raw amino-acid sequence, 269 residues long: Cytochrome c oxidase subunit 3 (269 aa).

The next 7 membrane-spanning stretches (helical) occupy residues 21–41 (PWPMLLSFALLSLTLSLGLTM), 45–65 (IGNMNLVYLALLVVTLTSVFW), 90–110 (GFLLFVLSEVLIFAGLFWAYF), 138–160 (PLLNTIILLSSGATITYSHHALI), 167–187 (ALSGLFITIWLIIIFVTCQYI), 205–225 (FYAGTGLHFLHMVMLAVMLII), and 247–267 (ILYCHVLDIIWLFLYIVFYWW).

It belongs to the cytochrome c oxidase subunit 3 family. Component of the cytochrome c oxidase (complex IV, CIV), a multisubunit enzyme composed of a catalytic core of 3 subunits and several supernumerary subunits. The complex exists as a monomer or a dimer and forms supercomplexes (SCs) in the inner mitochondrial membrane with ubiquinol-cytochrome c oxidoreductase (cytochrome b-c1 complex, complex III, CIII).

The protein localises to the mitochondrion inner membrane. It carries out the reaction 4 Fe(II)-[cytochrome c] + O2 + 8 H(+)(in) = 4 Fe(III)-[cytochrome c] + 2 H2O + 4 H(+)(out). In terms of biological role, component of the cytochrome c oxidase, the last enzyme in the mitochondrial electron transport chain which drives oxidative phosphorylation. The respiratory chain contains 3 multisubunit complexes succinate dehydrogenase (complex II, CII), ubiquinol-cytochrome c oxidoreductase (cytochrome b-c1 complex, complex III, CIII) and cytochrome c oxidase (complex IV, CIV), that cooperate to transfer electrons derived from NADH and succinate to molecular oxygen, creating an electrochemical gradient over the inner membrane that drives transmembrane transport and the ATP synthase. Cytochrome c oxidase is the component of the respiratory chain that catalyzes the reduction of oxygen to water. Electrons originating from reduced cytochrome c in the intermembrane space (IMS) are transferred via the dinuclear copper A center (CU(A)) of subunit 2 and heme A of subunit 1 to the active site in subunit 1, a binuclear center (BNC) formed by heme A3 and copper B (CU(B)). The BNC reduces molecular oxygen to 2 water molecules using 4 electrons from cytochrome c in the IMS and 4 protons from the mitochondrial matrix. This chain is Cytochrome c oxidase subunit 3 (COX3), found in Candida glabrata (strain ATCC 2001 / BCRC 20586 / JCM 3761 / NBRC 0622 / NRRL Y-65 / CBS 138) (Yeast).